The primary structure comprises 383 residues: L-aspartate/L-glutamate decarboxylase (383 aa).

Position 232 is an N6-(pyridoxal phosphate)lysine (Lys-232).

The protein belongs to the group II decarboxylase family. MfnA subfamily. Monomer. The cofactor is pyridoxal 5'-phosphate.

It carries out the reaction L-aspartate + H(+) = beta-alanine + CO2. The catalysed reaction is L-glutamate + H(+) = 4-aminobutanoate + CO2. It catalyses the reaction L-cysteate + H(+) = taurine + CO2. The enzyme catalyses 3-sulfino-L-alanine + H(+) = hypotaurine + CO2. It participates in cofactor biosynthesis; coenzyme A biosynthesis. Catalyzes the decarboxylation of L-aspartate to produce beta-alanine, and the decarboxylation of L-glutamate to produce 4-aminobutanoate. Can also use cysteate and, to a lesser extent, cysteine sulfite (3-sulfino-L-alanine), but not L-tyrosine. Specific activities toward L-aspartate and cysteate are higher than toward L-glutamate. The polypeptide is L-aspartate/L-glutamate decarboxylase (Pyrococcus horikoshii (strain ATCC 700860 / DSM 12428 / JCM 9974 / NBRC 100139 / OT-3)).